The primary structure comprises 38 residues: Potassium channel toxin alpha-KTx 3.17 (38 aa).

3 cysteine pairs are disulfide-bonded: cysteine 8–cysteine 28, cysteine 14–cysteine 33, and cysteine 18–cysteine 35.

Belongs to the short scorpion toxin superfamily. Potassium channel inhibitor family. Alpha-KTx 03 subfamily. Expressed by the venom gland.

It is found in the secreted. In terms of biological role, completely inhibits the (125)I-kaliotoxin binding on rat brain synaptosomes with high-affinity (IC(50)=0.1 nM). Is a potent Kv1.3/KCNA3 ligand. This is Potassium channel toxin alpha-KTx 3.17 from Buthus paris (Scorpion).